Consider the following 290-residue polypeptide: Glycine--tRNA ligase alpha subunit (290 aa).

It belongs to the class-II aminoacyl-tRNA synthetase family. Tetramer of two alpha and two beta subunits.

It localises to the cytoplasm. The catalysed reaction is tRNA(Gly) + glycine + ATP = glycyl-tRNA(Gly) + AMP + diphosphate. The chain is Glycine--tRNA ligase alpha subunit from Syntrophobacter fumaroxidans (strain DSM 10017 / MPOB).